A 117-amino-acid chain; its full sequence is Large ribosomal subunit protein uL18 (117 aa).

Belongs to the universal ribosomal protein uL18 family. As to quaternary structure, part of the 50S ribosomal subunit; part of the 5S rRNA/L5/L18/L25 subcomplex. Contacts the 5S and 23S rRNAs.

Functionally, this is one of the proteins that bind and probably mediate the attachment of the 5S RNA into the large ribosomal subunit, where it forms part of the central protuberance. This chain is Large ribosomal subunit protein uL18, found in Cronobacter sakazakii (strain ATCC BAA-894) (Enterobacter sakazakii).